We begin with the raw amino-acid sequence, 621 residues long: Replication factor A protein 1 (621 aa).

N-acetylserine is present on serine 2. A Phosphoserine; by ATM or ATR modification is found at serine 178. The OB DNA-binding region spans 197–284 (WTIKARVSYK…PYELNLDRDT (88 aa)). The C4-type zinc finger occupies 486–508 (CSNENCNKKVLEQPDGTWRCEKC).

It belongs to the replication factor A protein 1 family. In terms of assembly, component of the heterotrimeric canonical replication protein A complex (RPA). Interacts with POB3. The N-terminus is blocked.

The protein localises to the nucleus. As part of the replication protein A (RPA/RP-A), a single-stranded DNA-binding heterotrimeric complex, may play an essential role in DNA replication, recombination and repair. Binds and stabilizes single-stranded DNA intermediates, preventing complementary DNA reannealing and recruiting different proteins involved in DNA metabolism. Binds to single-stranded sequences participating in DNA replication in addition to those mediating transcriptional repression (URS1) and activation (CAR1). Stimulates the activity of a cognate strand exchange protein (SEP1). It cooperates with T-AG and DNA topoisomerase I to unwind template DNA containing the simian virus 40 origin of DNA replication. This Saccharomyces cerevisiae (strain ATCC 204508 / S288c) (Baker's yeast) protein is Replication factor A protein 1 (RFA1).